The following is a 610-amino-acid chain: Dihydroxy-acid dehydratase (610 aa).

Residue aspartate 81 participates in Mg(2+) binding. [2Fe-2S] cluster is bound at residue cysteine 122. Mg(2+) is bound by residues aspartate 123 and lysine 124. Lysine 124 is subject to N6-carboxylysine. Cysteine 193 provides a ligand contact to [2Fe-2S] cluster. Glutamate 489 provides a ligand contact to Mg(2+). Residue serine 515 is the Proton acceptor of the active site.

The protein belongs to the IlvD/Edd family. As to quaternary structure, homodimer. Requires [2Fe-2S] cluster as cofactor. It depends on Mg(2+) as a cofactor.

It catalyses the reaction (2R)-2,3-dihydroxy-3-methylbutanoate = 3-methyl-2-oxobutanoate + H2O. It carries out the reaction (2R,3R)-2,3-dihydroxy-3-methylpentanoate = (S)-3-methyl-2-oxopentanoate + H2O. It functions in the pathway amino-acid biosynthesis; L-isoleucine biosynthesis; L-isoleucine from 2-oxobutanoate: step 3/4. The protein operates within amino-acid biosynthesis; L-valine biosynthesis; L-valine from pyruvate: step 3/4. In terms of biological role, functions in the biosynthesis of branched-chain amino acids. Catalyzes the dehydration of (2R,3R)-2,3-dihydroxy-3-methylpentanoate (2,3-dihydroxy-3-methylvalerate) into 2-oxo-3-methylpentanoate (2-oxo-3-methylvalerate) and of (2R)-2,3-dihydroxy-3-methylbutanoate (2,3-dihydroxyisovalerate) into 2-oxo-3-methylbutanoate (2-oxoisovalerate), the penultimate precursor to L-isoleucine and L-valine, respectively. This is Dihydroxy-acid dehydratase from Xylella fastidiosa (strain M12).